The following is a 230-amino-acid chain: Flagellar L-ring protein (230 aa).

The signal sequence occupies residues 1–22 (MSPLSNFARTALACAVAALLGG). A lipid anchor (N-palmitoyl cysteine) is attached at cysteine 23. Cysteine 23 carries the S-diacylglycerol cysteine lipid modification.

Belongs to the FlgH family. As to quaternary structure, the basal body constitutes a major portion of the flagellar organelle and consists of four rings (L,P,S, and M) mounted on a central rod.

It localises to the cell outer membrane. Its subcellular location is the bacterial flagellum basal body. Functionally, assembles around the rod to form the L-ring and probably protects the motor/basal body from shearing forces during rotation. The sequence is that of Flagellar L-ring protein from Stenotrophomonas maltophilia (strain R551-3).